Consider the following 231-residue polypeptide: (S)-2-haloacid dehalogenase 4A (231 aa).

D11 acts as the Nucleophile in catalysis. An (S)-2-haloacid contacts are provided by residues 12–13 (AY), R42, and 119–120 (SN). The tract at residues 176–181 (SSNAWD) is important for catalytic activity.

This sequence belongs to the HAD-like hydrolase superfamily. S-2-haloalkanoic acid dehalogenase family.

It catalyses the reaction an (S)-2-haloacid + H2O = a (2R)-2-hydroxycarboxylate + a halide anion + H(+). The enzyme catalyses (S)-2-chloropropanoate + H2O = (R)-lactate + chloride + H(+). Functionally, catalyzes the hydrolytic dehalogenation of small (S)-2-haloalkanoic acids to yield the corresponding (R)-2-hydroxyalkanoic acids. Acts on acids of short chain lengths, C(2) to C(4), with inversion of configuration at C-3. Active with 2-halogenated carboxylic acids and converts only the S-isomer (or L-isomer) of 2-chloropropionic acid with inversion of configuration to produce R-lactate (or D-isomer). This chain is (S)-2-haloacid dehalogenase 4A, found in Burkholderia cepacia (Pseudomonas cepacia).